Reading from the N-terminus, the 203-residue chain is MNIGVLGFQGDVQEHMDMLKKLSRKNRDLTLTHVKRVIDLEHVDALIIPGGESTTIYKLTLEYGLYDAIVKRSAEGMPIMATCAGLILVSKNTNDERVRGMGLLDVTIRRNAYGRQVMSFETDIEINGIGMFPAVFIRAPVIEDSGKTEVLGTLDGKPVIVKQGNVIGMTFHPELTGDTRLHEYFINMVRGRGGYISTADVKR.

51 to 53 contributes to the L-glutamine binding site; it reads GES. The Nucleophile role is filled by C83. L-glutamine-binding positions include R110 and 137 to 138; that span reads IR. Catalysis depends on charge relay system residues H172 and E174.

This sequence belongs to the glutaminase PdxT/SNO family. In terms of assembly, in the presence of PdxS, forms a dodecamer of heterodimers. Only shows activity in the heterodimer.

The enzyme catalyses aldehydo-D-ribose 5-phosphate + D-glyceraldehyde 3-phosphate + L-glutamine = pyridoxal 5'-phosphate + L-glutamate + phosphate + 3 H2O + H(+). It catalyses the reaction L-glutamine + H2O = L-glutamate + NH4(+). The protein operates within cofactor biosynthesis; pyridoxal 5'-phosphate biosynthesis. Catalyzes the hydrolysis of glutamine to glutamate and ammonia as part of the biosynthesis of pyridoxal 5'-phosphate. The resulting ammonia molecule is channeled to the active site of PdxS. The chain is Pyridoxal 5'-phosphate synthase subunit PdxT from Thermoplasma acidophilum (strain ATCC 25905 / DSM 1728 / JCM 9062 / NBRC 15155 / AMRC-C165).